The following is a 328-amino-acid chain: Malate dehydrogenase (328 aa).

Gly11–Gly17 provides a ligand contact to NAD(+). Substrate contacts are provided by Arg94 and Arg100. NAD(+) is bound by residues Asn107, Gln114, and Val131–Asn133. 2 residues coordinate substrate: Asn133 and Arg164. His189 (proton acceptor) is an active-site residue.

Belongs to the LDH/MDH superfamily. MDH type 2 family.

It catalyses the reaction (S)-malate + NAD(+) = oxaloacetate + NADH + H(+). In terms of biological role, catalyzes the reversible oxidation of malate to oxaloacetate. In Stenotrophomonas maltophilia (strain R551-3), this protein is Malate dehydrogenase.